Reading from the N-terminus, the 906-residue chain is Cadherin-2 (906 aa).

The first 25 residues, 1–25 (MCRIAGAPRTLLPLLAALLQASVEA), serve as a signal peptide directing secretion. Residues 26-159 (SGEIALCKTG…HSGALQRQKR (134 aa)) constitute a propeptide that is removed on maturation. Cadherin domains lie at 160–267 (DWVI…RPEF), 268–382 (LHQV…PPEF), 383–497 (TAMT…NPYF), 498–603 (APNP…DNAP), and 604–717 (QVLP…RIVG). Topologically, residues 160–724 (DWVIPPINLP…IVGAGLGTGA (565 aa)) are extracellular. Glu170 lines the Ca(2+) pocket. Asn190 carries an N-linked (GlcNAc...) asparagine glycan. Ca(2+) is bound by residues Asp226, Glu228, Asp259, Met260, Asn261, Asp262, and Asn263. Residue Asn273 is glycosylated (N-linked (GlcNAc...) asparagine). 3 residues coordinate Ca(2+): Asp293, Asp295, and Asn301. N-linked (GlcNAc...) asparagine glycosylation is present at Asn325. Asp353 is a Ca(2+) binding site. 4 N-linked (GlcNAc...) asparagine glycosylation sites follow: Asn402, Asn572, Asn651, and Asn692. A helical membrane pass occupies residues 725 to 745 (IIAILLCIIILLILVLMFVVW). The Cytoplasmic segment spans residues 746 to 906 (MKRRDKERQA…LADMYGGGDD (161 aa)). Residues 863–880 (SGSTAGSLSSLNSSSSGG) are compositionally biased toward low complexity. The segment at 863-883 (SGSTAGSLSSLNSSSSGGDQD) is disordered.

As to quaternary structure, homodimer (via extracellular region). Can also form heterodimers with other cadherins (via extracellular region). Dimerization occurs in trans, i.e. with a cadherin chain from another cell. Interacts with CDCP1. Interacts with PCDH8; this complex may also include TAOK2. The interaction with PCDH8 may lead to internalization through TAOK2/p38 MAPK pathway. Identified in a complex containing FGFR4, NCAM1, CDH2, PLCG1, FRS2, SRC, SHC1, GAP43 and CTTN. May interact with OBSCN (via protein kinase domain 2). Interacts with FBXO45. Cleaved by MMP24. Ectodomain cleavage leads to the generation of a soluble 90 kDa N-terminal soluble fragment and a 45 kDa membrane-bound C-terminal fragment 1 (CTF1), which is further cleaved by gamma-secretase into a 35 kDa. Cleavage in neural stem cells by MMP24 affects CDH2-mediated anchorage of neural stem cells to ependymocytes in the adult subependymal zone, leading to modulate neural stem cell quiescence. In terms of processing, may be phosphorylated by OBSCN. Post-translationally, O-glycosylated on Ser and Thr residues. Expressed in cardiac muscle (at protein level).

The protein localises to the cell membrane. The protein resides in the sarcolemma. Its subcellular location is the cell junction. It localises to the adherens junction. It is found in the desmosome. The protein localises to the cell surface. Functionally, calcium-dependent cell adhesion protein; preferentially mediates homotypic cell-cell adhesion by dimerization with a CDH2 chain from another cell. Cadherins may thus contribute to the sorting of heterogeneous cell types. Acts as a regulator of neural stem cells quiescence by mediating anchorage of neural stem cells to ependymocytes in the adult subependymal zone: upon cleavage by MMP24, CDH2-mediated anchorage is affected, leading to modulate neural stem cell quiescence. Plays a role in cell-to-cell junction formation between pancreatic beta cells and neural crest stem (NCS) cells, promoting the formation of processes by NCS cells. Required for proper neurite branching. Required for pre- and postsynaptic organization. CDH2 may be involved in neuronal recognition mechanism. In hippocampal neurons, may regulate dendritic spine density. The sequence is that of Cadherin-2 (Cdh2) from Mus musculus (Mouse).